Consider the following 384-residue polypeptide: MFSRKQVQKRNNELSSLHCSNSSNSLNRIHKNEETAKGTVGVNARGNNRSDNVASPGQLRPRTSSILTDNSEWILFSPENAEGEYVITSSDGIRRTNSNHYYYNYNEDDILSSSRRSSEDVYDAEQEYTEQPVNNHVQVEDEEDDDSIINDLTHVVDDYDYEEEDDKQDLTTRIDNWRKKQVSELLNELNHDDDLDPVLNRDKIDLIQSWGIENEKLNTKPRAKKRQRKSKRASFYGQDLLSKYSMEDLKIIKQIVAQLRDDLDKVKHDKPSSPLPNYHNTLKQAPSSNSQNPSFISYYSNYLTKNNSQQTPNSQSTSGSLLNNPNLEKYLPLFLKNLLYEDSNGSHQHPETSEKEHFWDNDLKSVNSSILTLSSNSKLKQEIL.

Positions 1 to 63 (MFSRKQVQKR…ASPGQLRPRT (63 aa)) are disordered. Low complexity predominate over residues 13-27 (ELSSLHCSNSSNSLN). A compositionally biased stretch (polar residues) spans 45–63 (RGNNRSDNVASPGQLRPRT). The residue at position 112 (Ser-112) is a Phosphoserine. Positions 266–291 (VKHDKPSSPLPNYHNTLKQAPSSNSQ) are disordered. Over residues 278-291 (YHNTLKQAPSSNSQ) the composition is skewed to polar residues.

As to quaternary structure, interacts with ATG11, ATG17, ATG37, PEX3 and PEX14. Post-translationally, phosphorylation at Ser-112 is required for micro- and macropexophagy.

It localises to the vacuole lumen. It is found in the preautophagosomal structure. The protein resides in the peroxisome membrane. Acts as the peroxisome receptor for pexophagy. Required for both micropexophagy and macropexophagy, but not for the cytoplasm to vacuole transport (Cvt) or autophagy pathways. Required for functional micropexophagic apparatus (MIPA) and relocation of ATG11 to the peroxisome-sequestering arms of the vacuole. This Komagataella phaffii (strain GS115 / ATCC 20864) (Yeast) protein is Autophagy-related protein 30 (ATG30).